The following is a 145-amino-acid chain: Large ribosomal subunit protein uL13 (145 aa).

The protein belongs to the universal ribosomal protein uL13 family. In terms of assembly, part of the 50S ribosomal subunit.

Its function is as follows. This protein is one of the early assembly proteins of the 50S ribosomal subunit, although it is not seen to bind rRNA by itself. It is important during the early stages of 50S assembly. The polypeptide is Large ribosomal subunit protein uL13 (Staphylococcus epidermidis (strain ATCC 35984 / DSM 28319 / BCRC 17069 / CCUG 31568 / BM 3577 / RP62A)).